The sequence spans 119 residues: V-type proton ATPase subunit F (119 aa).

Belongs to the V-ATPase F subunit family. In terms of assembly, V-ATPase is a heteromultimeric enzyme made up of two complexes: the ATP-hydrolytic V1 complex and the proton translocation V0 complex. The V1 complex consists of three catalytic AB heterodimers that form a heterohexamer, three peripheral stalks each consisting of EG heterodimers, one central rotor including subunits D and F, and the regulatory subunits C and H. The proton translocation complex V0 consists of the proton transport subunit a, a ring of proteolipid subunits c9c'', rotary subunit d, subunits e and f, and the accessory subunits ATP6AP1/Ac45 and ATP6AP2/PRR.

Its subcellular location is the cytoplasmic vesicle. It is found in the secretory vesicle. The protein localises to the synaptic vesicle membrane. The protein resides in the clathrin-coated vesicle membrane. Functionally, subunit of the V1 complex of vacuolar(H+)-ATPase (V-ATPase), a multisubunit enzyme composed of a peripheral complex (V1) that hydrolyzes ATP and a membrane integral complex (V0) that translocates protons. V-ATPase is responsible for acidifying and maintaining the pH of intracellular compartments and in some cell types, is targeted to the plasma membrane, where it is responsible for acidifying the extracellular environment. This is V-type proton ATPase subunit F (Atp6v1f) from Mus musculus (Mouse).